Here is a 114-residue protein sequence, read N- to C-terminus: T cell receptor beta variable 10-3 (114 aa).

The first 21 residues, 1–21, serve as a signal peptide directing secretion; sequence MGTRLFFYVALCLLWTGHMDA. One can recognise an Ig-like domain in the interval 22-114; that stretch reads GITQSPRHKV…TSVYFCAISE (93 aa). Cys42 and Cys110 are disulfide-bonded.

As to quaternary structure, alpha-beta TR is a heterodimer composed of an alpha and beta chain; disulfide-linked. The alpha-beta TR is associated with the transmembrane signaling CD3 coreceptor proteins to form the TR-CD3 (TcR or TCR). The assembly of alpha-beta TR heterodimers with CD3 occurs in the endoplasmic reticulum where a single alpha-beta TR heterodimer associates with one CD3D-CD3E heterodimer, one CD3G-CD3E heterodimer and one CD247 homodimer forming a stable octameric structure. CD3D-CD3E and CD3G-CD3E heterodimers preferentially associate with TR alpha and TR beta chains, respectively. The association of the CD247 homodimer is the last step of TcR assembly in the endoplasmic reticulum and is required for transport to the cell surface.

It localises to the cell membrane. V region of the variable domain of T cell receptor (TR) beta chain that participates in the antigen recognition. Alpha-beta T cell receptors are antigen specific receptors which are essential to the immune response and are present on the cell surface of T lymphocytes. Recognize peptide-major histocompatibility (MH) (pMH) complexes that are displayed by antigen presenting cells (APC), a prerequisite for efficient T cell adaptive immunity against pathogens. Binding of alpha-beta TR to pMH complex initiates TR-CD3 clustering on the cell surface and intracellular activation of LCK that phosphorylates the ITAM motifs of CD3G, CD3D, CD3E and CD247 enabling the recruitment of ZAP70. In turn ZAP70 phosphorylates LAT, which recruits numerous signaling molecules to form the LAT signalosome. The LAT signalosome propagates signal branching to three major signaling pathways, the calcium, the mitogen-activated protein kinase (MAPK) kinase and the nuclear factor NF-kappa-B (NF-kB) pathways, leading to the mobilization of transcription factors that are critical for gene expression and essential for T cell growth and differentiation. The T cell repertoire is generated in the thymus, by V-(D)-J rearrangement. This repertoire is then shaped by intrathymic selection events to generate a peripheral T cell pool of self-MH restricted, non-autoaggressive T cells. Post-thymic interaction of alpha-beta TR with the pMH complexes shapes TR structural and functional avidity. In Homo sapiens (Human), this protein is T cell receptor beta variable 10-3.